We begin with the raw amino-acid sequence, 252 residues long: MSDWNPSLYLHFSAERSRPAVELLARVPLENVEYVADLGCGPGNSTALLHQRWPAARITGIDSSPAMIAEARSALPDCQFVEADIRNWQPEQALDLIFANASLQWLPDHYELFPHLVSLLNPQGVLAVQMPDNWLEPTHVLMREVAWEQNYPDRGREPLAGVHAYYDILSEAGCEVDIWRITYYHQMPSHQAIIDWVTATGLRPWLQDLTESEQQLFLTRYHQMLEEQYPLQENGQILLAFPRLFIVARRTE.

This sequence belongs to the methyltransferase superfamily. Tam family.

It localises to the cytoplasm. The catalysed reaction is trans-aconitate + S-adenosyl-L-methionine = (E)-3-(methoxycarbonyl)pent-2-enedioate + S-adenosyl-L-homocysteine. Functionally, catalyzes the S-adenosylmethionine monomethyl esterification of trans-aconitate. The sequence is that of Trans-aconitate 2-methyltransferase from Shigella flexneri serotype 5b (strain 8401).